The sequence spans 414 residues: Esterase FrsA (414 aa).

Belongs to the FrsA family.

The catalysed reaction is a carboxylic ester + H2O = an alcohol + a carboxylate + H(+). In terms of biological role, catalyzes the hydrolysis of esters. The protein is Esterase FrsA of Salmonella choleraesuis (strain SC-B67).